The primary structure comprises 812 residues: DNA translocase FtsK 1 (812 aa).

Residues 1–11 are compositionally biased toward basic residues; the sequence is MTEKSHKKTAK. The tract at residues 1 to 36 is disordered; sequence MTEKSHKKTAKGRAGSPSPTSARNKKADNGARGNKV. A compositionally biased stretch (basic and acidic residues) spans 25-36; sequence KKADNGARGNKV. Transmembrane regions (helical) follow at residues 63 to 83, 116 to 136, 156 to 176, 184 to 204, and 210 to 230; these read IGDA…ISLI, VGYY…CVVL, IAAA…YFVL, LPVG…AWLL, and LLII…ISWL. Over 231 to 812 the chain is Cytoplasmic; that stretch reads EFLNGAGRAV…RKILAHKDHL (582 aa). The FtsK domain occupies 461-670; sequence GTPVVGDLAK…FTVQSKIDSR (210 aa). 481-486 contacts ATP; that stretch reads GSGKSV.

Belongs to the FtsK/SpoIIIE/SftA family. Homohexamer. Forms a ring that surrounds DNA.

The protein localises to the cell inner membrane. Its function is as follows. Essential cell division protein that coordinates cell division and chromosome segregation. The N-terminus is involved in assembly of the cell-division machinery. The C-terminus functions as a DNA motor that moves dsDNA in an ATP-dependent manner towards the dif recombination site, which is located within the replication terminus region. Translocation stops specifically at Xer-dif sites, where FtsK interacts with the Xer recombinase, allowing activation of chromosome unlinking by recombination. FtsK orienting polar sequences (KOPS) guide the direction of DNA translocation. FtsK can remove proteins from DNA as it translocates, but translocation stops specifically at XerCD-dif site, thereby preventing removal of XerC and XerD from dif. This is DNA translocase FtsK 1 (ftsK1) from Neisseria meningitidis serogroup B (strain ATCC BAA-335 / MC58).